Here is a 234-residue protein sequence, read N- to C-terminus: Thioredoxin-dependent peroxide reductase, mitochondrial (234 aa).

The N-terminal 30 residues, 1–30 (MSFVARSLIRNVPLMGKAILSQQKQIAARL), are a transit peptide targeting the mitochondrion. The 159-residue stretch at 40 to 198 (VRVQQPAPDF…VLRLIKAFQF (159 aa)) folds into the Thioredoxin domain. Catalysis depends on C85, which acts as the Cysteine sulfenic acid (-SOH) intermediate.

Belongs to the peroxiredoxin family. AhpC/Prx1 subfamily. In terms of assembly, homodimer; disulfide-linked, upon oxidation. 6 homodimers assemble to form a ring-like dodecamer. Also exists as a monomer, however the monomeric form is present at a much lower level than the homodimeric form. In terms of tissue distribution, expressed in thoracic flight muscles (at protein level). Detected in the head and body (at protein level).

Its subcellular location is the mitochondrion. It catalyses the reaction a hydroperoxide + [thioredoxin]-dithiol = an alcohol + [thioredoxin]-disulfide + H2O. In terms of biological role, thiol-specific peroxidase that catalyzes the reduction of hydrogen peroxide and organic hydroperoxides to water and alcohols, respectively. Plays a role in cell protection against oxidative stress by detoxifying peroxides. May be involved in aging-associated changes in the responsiveness to oxidative stress. Involved in the maintenance of global thiol redox homeostasis. Functions in the central nervous system (CNS) and in motor neurons and is essential for normal motor function. This is Thioredoxin-dependent peroxide reductase, mitochondrial from Drosophila melanogaster (Fruit fly).